The sequence spans 758 residues: 5-methyltetrahydropteroyltriglutamate--homocysteine methyltransferase (758 aa).

Residues 16–19 and Lys112 contribute to the 5-methyltetrahydropteroyltri-L-glutamate site; that span reads RELK. L-homocysteine-binding positions include 433–435 and Glu486; that span reads IGS. Residues 433-435 and Glu486 contribute to the L-methionine site; that span reads IGS. Residues 517–518 and Trp563 each bind 5-methyltetrahydropteroyltri-L-glutamate; that span reads RC. Asp601 serves as a coordination point for L-homocysteine. Asp601 provides a ligand contact to L-methionine. Glu607 contacts 5-methyltetrahydropteroyltri-L-glutamate. Zn(2+) contacts are provided by His643, Cys645, and Glu667. His696 acts as the Proton donor in catalysis. Cys728 serves as a coordination point for Zn(2+).

The protein belongs to the vitamin-B12 independent methionine synthase family. The cofactor is Zn(2+).

It carries out the reaction 5-methyltetrahydropteroyltri-L-glutamate + L-homocysteine = tetrahydropteroyltri-L-glutamate + L-methionine. Its pathway is amino-acid biosynthesis; L-methionine biosynthesis via de novo pathway; L-methionine from L-homocysteine (MetE route): step 1/1. In terms of biological role, catalyzes the transfer of a methyl group from 5-methyltetrahydrofolate to homocysteine resulting in methionine formation. This chain is 5-methyltetrahydropteroyltriglutamate--homocysteine methyltransferase, found in Neisseria meningitidis serogroup A / serotype 4A (strain DSM 15465 / Z2491).